Reading from the N-terminus, the 69-residue chain is Sperm protamine P1 (69 aa).

Residues 1-69 form a disordered region; the sequence is MARYRHSRSR…YSRRRRRRYY (69 aa).

Belongs to the protamine P1 family. In terms of tissue distribution, testis.

Its subcellular location is the nucleus. The protein localises to the chromosome. Functionally, protamines substitute for histones in the chromatin of sperm during the haploid phase of spermatogenesis. They compact sperm DNA into a highly condensed, stable and inactive complex. In Pseudochirops cupreus (Coppery ringtail), this protein is Sperm protamine P1 (PRM1).